Here is a 556-residue protein sequence, read N- to C-terminus: 2-succinyl-5-enolpyruvyl-6-hydroxy-3-cyclohexene-1-carboxylate synthase (556 aa).

Belongs to the TPP enzyme family. MenD subfamily. Homodimer. The cofactor is Mg(2+). It depends on Mn(2+) as a cofactor. Thiamine diphosphate serves as cofactor.

The catalysed reaction is isochorismate + 2-oxoglutarate + H(+) = 5-enolpyruvoyl-6-hydroxy-2-succinyl-cyclohex-3-ene-1-carboxylate + CO2. The protein operates within quinol/quinone metabolism; 1,4-dihydroxy-2-naphthoate biosynthesis; 1,4-dihydroxy-2-naphthoate from chorismate: step 2/7. Its pathway is quinol/quinone metabolism; menaquinone biosynthesis. Its function is as follows. Catalyzes the thiamine diphosphate-dependent decarboxylation of 2-oxoglutarate and the subsequent addition of the resulting succinic semialdehyde-thiamine pyrophosphate anion to isochorismate to yield 2-succinyl-5-enolpyruvyl-6-hydroxy-3-cyclohexene-1-carboxylate (SEPHCHC). The sequence is that of 2-succinyl-5-enolpyruvyl-6-hydroxy-3-cyclohexene-1-carboxylate synthase from Mycobacterium leprae (strain Br4923).